We begin with the raw amino-acid sequence, 307 residues long: Aspartate carbamoyltransferase catalytic subunit (307 aa).

Carbamoyl phosphate-binding residues include Arg54 and Thr55. Residue Lys83 coordinates L-aspartate. Carbamoyl phosphate is bound by residues Arg104, His132, and Gln135. Arg165 and Arg228 together coordinate L-aspartate. Carbamoyl phosphate-binding residues include Leu267 and Pro268.

This sequence belongs to the aspartate/ornithine carbamoyltransferase superfamily. ATCase family. Heterododecamer (2C3:3R2) of six catalytic PyrB chains organized as two trimers (C3), and six regulatory PyrI chains organized as three dimers (R2).

The enzyme catalyses carbamoyl phosphate + L-aspartate = N-carbamoyl-L-aspartate + phosphate + H(+). It participates in pyrimidine metabolism; UMP biosynthesis via de novo pathway; (S)-dihydroorotate from bicarbonate: step 2/3. Functionally, catalyzes the condensation of carbamoyl phosphate and aspartate to form carbamoyl aspartate and inorganic phosphate, the committed step in the de novo pyrimidine nucleotide biosynthesis pathway. This is Aspartate carbamoyltransferase catalytic subunit from Clostridium perfringens (strain 13 / Type A).